A 334-amino-acid polypeptide reads, in one-letter code: Zinc-finger homeodomain protein 10 (334 aa).

Low complexity predominate over residues 1–15; that stretch reads MMDMTPTITTTTTPT. Disordered regions lie at residues 1–33 and 103–164; these read MMDM…QPAK and FHRR…LLSL. Residues 56 to 107 form a ZF-HD dimerization-type; degenerate zinc finger; that stretch reads YKECLKNHAAALGGHALDGCGEFMPSPSSISSDPTSLKCAACGCHRNFHRRD. Residues 136–155 are compositionally biased toward pro residues; that stretch reads PPPPPPPPPRSPNSASPPPI. Positions 200–263 form a DNA-binding region, homeobox; the sequence is RKRFRTKFSQ…NNKNTFNRRD (64 aa). The disordered stretch occupies residues 292–334; the sequence is NGHHGVGGGGELHQSVSSGGGGGGFDSDSGGANGGNVNGSSSS. Positions 309–328 are enriched in gly residues; sequence SGGGGGGFDSDSGGANGGNV.

As to quaternary structure, homo- and heterodimer with other ZFHD proteins. Interacts with MIF1, MIF2 and MIF3; these interactions prevent nuclear localization and DNA-binding to inhibit transcription regulation activity. Binds to ZHD1, ZHD2, ZHD4, ZHD5, ZHD6, ZHD7 and ZHD8. Interacts with KIN10 and KIN11. As to expression, mostly expressed in rosettes (e.g. young leaves), flowers (e.g. styles), siliques and inflorescence.

The protein localises to the nucleus. Functionally, putative transcription factor. Probably involved in establishing polarity during leaf development through the gibberellic acid (GA) signaling pathway. This chain is Zinc-finger homeodomain protein 10 (ZHD10), found in Arabidopsis thaliana (Mouse-ear cress).